The sequence spans 106 residues: UPF0145 protein SCO3412 (106 aa).

It belongs to the UPF0145 family.

The polypeptide is UPF0145 protein SCO3412 (Streptomyces coelicolor (strain ATCC BAA-471 / A3(2) / M145)).